The sequence spans 248 residues: Adenosylcobinamide-GDP ribazoletransferase (248 aa).

The next 6 helical transmembrane spans lie at 36–56, 59–79, 114–134, 137–157, 170–190, and 199–219; these read FFLP…YLAL, FLPP…ITGG, GTIA…SLVL, YSIA…FLCL, IFIG…VLAL, and ATII…LLCL.

Belongs to the CobS family. Requires Mg(2+) as cofactor.

It localises to the cell membrane. The catalysed reaction is alpha-ribazole + adenosylcob(III)inamide-GDP = adenosylcob(III)alamin + GMP + H(+). It catalyses the reaction alpha-ribazole 5'-phosphate + adenosylcob(III)inamide-GDP = adenosylcob(III)alamin 5'-phosphate + GMP + H(+). The protein operates within cofactor biosynthesis; adenosylcobalamin biosynthesis; adenosylcobalamin from cob(II)yrinate a,c-diamide: step 7/7. Joins adenosylcobinamide-GDP and alpha-ribazole to generate adenosylcobalamin (Ado-cobalamin). Also synthesizes adenosylcobalamin 5'-phosphate from adenosylcobinamide-GDP and alpha-ribazole 5'-phosphate. The sequence is that of Adenosylcobinamide-GDP ribazoletransferase from Clostridium botulinum (strain Okra / Type B1).